Here is a 198-residue protein sequence, read N- to C-terminus: tRNA (pseudouridine(54)-N(1))-methyltransferase (198 aa).

Leu-128 provides a ligand contact to S-adenosyl-L-methionine.

Belongs to the methyltransferase superfamily. TrmY family. Homodimer.

Its subcellular location is the cytoplasm. It catalyses the reaction pseudouridine(54) in tRNA + S-adenosyl-L-methionine = N(1)-methylpseudouridine(54) in tRNA + S-adenosyl-L-homocysteine + H(+). Specifically catalyzes the N1-methylation of pseudouridine at position 54 (Psi54) in tRNAs. The chain is tRNA (pseudouridine(54)-N(1))-methyltransferase from Haloarcula marismortui (strain ATCC 43049 / DSM 3752 / JCM 8966 / VKM B-1809) (Halobacterium marismortui).